The following is a 354-amino-acid chain: Regulatory protein RapD (354 aa).

6 TPR repeats span residues F64–A105, K107–T126, A130–Q163, I171–L204, C211–E244, and I321–R353.

The protein belongs to the Rap family.

It localises to the cytoplasm. This chain is Regulatory protein RapD (rapD), found in Bacillus subtilis (strain 168).